Consider the following 248-residue polypeptide: UPF0524 protein C3orf70 homolog (248 aa).

A disordered region spans residues 169–248 (KESDTPKLGH…EVIETMETTV (80 aa)). Residues 200–227 (SCDEDTEEGAELSSEEDYSPESSWEPDE) show a composition bias toward acidic residues.

Belongs to the UPF0524 family.

In terms of biological role, may play a role in neuronal and neurobehavioral development. The protein is UPF0524 protein C3orf70 homolog of Mus musculus (Mouse).